The primary structure comprises 332 residues: tRNA U34 carboxymethyltransferase (332 aa).

Residues Lys96, Trp110, Lys115, Gly135, 157-159 (DPT), 190-191 (IE), Met205, Tyr209, and Arg324 contribute to the carboxy-S-adenosyl-L-methionine site.

It belongs to the class I-like SAM-binding methyltransferase superfamily. CmoB family. As to quaternary structure, homotetramer.

It carries out the reaction carboxy-S-adenosyl-L-methionine + 5-hydroxyuridine(34) in tRNA = 5-carboxymethoxyuridine(34) in tRNA + S-adenosyl-L-homocysteine + H(+). In terms of biological role, catalyzes carboxymethyl transfer from carboxy-S-adenosyl-L-methionine (Cx-SAM) to 5-hydroxyuridine (ho5U) to form 5-carboxymethoxyuridine (cmo5U) at position 34 in tRNAs. This Alteromonas mediterranea (strain DSM 17117 / CIP 110805 / LMG 28347 / Deep ecotype) protein is tRNA U34 carboxymethyltransferase.